A 252-amino-acid polypeptide reads, in one-letter code: Triosephosphate isomerase (252 aa).

10-12 is a binding site for substrate; it reads NWK. His96 acts as the Electrophile in catalysis. Residue Glu168 is the Proton acceptor of the active site. Residues Gly174, Ser214, and 235-236 contribute to the substrate site; that span reads GG.

This sequence belongs to the triosephosphate isomerase family. As to quaternary structure, homodimer.

The protein localises to the cytoplasm. It carries out the reaction D-glyceraldehyde 3-phosphate = dihydroxyacetone phosphate. It functions in the pathway carbohydrate biosynthesis; gluconeogenesis. It participates in carbohydrate degradation; glycolysis; D-glyceraldehyde 3-phosphate from glycerone phosphate: step 1/1. In terms of biological role, involved in the gluconeogenesis. Catalyzes stereospecifically the conversion of dihydroxyacetone phosphate (DHAP) to D-glyceraldehyde-3-phosphate (G3P). In Streptococcus thermophilus (strain CNRZ 1066), this protein is Triosephosphate isomerase.